The following is a 416-amino-acid chain: MENNNVPKHLYFYSVGLSYKKADAEVRGQFSLDAVAKTRLLEQAKNDGIESLLVTSTCNRTEIYGFAEHPFQLIKLICDNSNGSVDAFQKVGFVYKNQEAINHMFRVGTGLDSQILGDFEIISQIKTSFTHSKSMGLANAFMERLVNAVIQASKRIKTETEISSGATSVSFASVQYILKNVEDISNKNILLFGTGKIGRNTCENLVKHTKNEHITLINRTKDKAEKLAGKLNLIVKDYSELHLELQKADVVVVATGAQNPTVDKAILNLKKPLLILDLSIPKNVNENVEELEGVTLIHMDYLSQLTDETLENRKLHIPAAEAIIEEIKEEFVTWMKGRKFAPTINALKEKLNAIKASELDFQSKKIADFNEEQAEIISNRIIQKITTHFANHLKDDDTMVDESIEWIEKVFKIKAS.

Substrate-binding positions include 57–60, serine 113, 118–120, and glutamine 124; these read TCNR and DFE. The active-site Nucleophile is cysteine 58. 193–198 provides a ligand contact to NADP(+); the sequence is GTGKIG.

It belongs to the glutamyl-tRNA reductase family. As to quaternary structure, homodimer.

It catalyses the reaction (S)-4-amino-5-oxopentanoate + tRNA(Glu) + NADP(+) = L-glutamyl-tRNA(Glu) + NADPH + H(+). It participates in porphyrin-containing compound metabolism; protoporphyrin-IX biosynthesis; 5-aminolevulinate from L-glutamyl-tRNA(Glu): step 1/2. Functionally, catalyzes the NADPH-dependent reduction of glutamyl-tRNA(Glu) to glutamate 1-semialdehyde (GSA). The chain is Glutamyl-tRNA reductase 1 from Flavobacterium johnsoniae (strain ATCC 17061 / DSM 2064 / JCM 8514 / BCRC 14874 / CCUG 350202 / NBRC 14942 / NCIMB 11054 / UW101) (Cytophaga johnsonae).